Consider the following 122-residue polypeptide: uncharacterized protein (122 aa).

This is an uncharacterized protein from Caenorhabditis elegans.